A 416-amino-acid polypeptide reads, in one-letter code: S-adenosylmethionine synthase (416 aa).

His-14 is a binding site for ATP. A Mg(2+)-binding site is contributed by Asp-16. Residue Glu-42 coordinates K(+). Residues Glu-55 and Gln-98 each coordinate L-methionine. The flexible loop stretch occupies residues 98–108; sequence QSADINQGVDR. ATP is bound by residues 164–166, 240–241, Asp-249, 255–256, Ala-272, and Lys-276; these read DAK, KF, and RK. Residue Asp-249 coordinates L-methionine. Lys-280 provides a ligand contact to L-methionine.

Belongs to the AdoMet synthase family. In terms of assembly, homotetramer; dimer of dimers. Requires Mg(2+) as cofactor. The cofactor is K(+).

The protein localises to the cytoplasm. It catalyses the reaction L-methionine + ATP + H2O = S-adenosyl-L-methionine + phosphate + diphosphate. Its pathway is amino-acid biosynthesis; S-adenosyl-L-methionine biosynthesis; S-adenosyl-L-methionine from L-methionine: step 1/1. Catalyzes the formation of S-adenosylmethionine (AdoMet) from methionine and ATP. The overall synthetic reaction is composed of two sequential steps, AdoMet formation and the subsequent tripolyphosphate hydrolysis which occurs prior to release of AdoMet from the enzyme. This is S-adenosylmethionine synthase from Flavobacterium psychrophilum (strain ATCC 49511 / DSM 21280 / CIP 103535 / JIP02/86).